A 472-amino-acid polypeptide reads, in one-letter code: Membrane-bound lytic murein transglycosylase F (472 aa).

The first 24 residues, 1-24 (MRLLVIFLLALLLMACKEAPKPLA), serve as a signal peptide directing secretion. The tract at residues 25–259 (DPRTTKEIIV…HLIDRYYGHA (235 aa)) is non-LT domain. Residues 260 to 472 (DRLKPVDVTT…NGFGNTLSQE (213 aa)) form an LT domain region. Residue E306 is part of the active site.

The protein in the N-terminal section; belongs to the bacterial solute-binding protein 3 family. It in the C-terminal section; belongs to the transglycosylase Slt family.

The protein localises to the cell outer membrane. The enzyme catalyses Exolytic cleavage of the (1-&gt;4)-beta-glycosidic linkage between N-acetylmuramic acid (MurNAc) and N-acetylglucosamine (GlcNAc) residues in peptidoglycan, from either the reducing or the non-reducing ends of the peptidoglycan chains, with concomitant formation of a 1,6-anhydrobond in the MurNAc residue.. Its function is as follows. Murein-degrading enzyme that degrades murein glycan strands and insoluble, high-molecular weight murein sacculi, with the concomitant formation of a 1,6-anhydromuramoyl product. Lytic transglycosylases (LTs) play an integral role in the metabolism of the peptidoglycan (PG) sacculus. Their lytic action creates space within the PG sacculus to allow for its expansion as well as for the insertion of various structures such as secretion systems and flagella. In Methylobacillus flagellatus (strain ATCC 51484 / DSM 6875 / VKM B-1610 / KT), this protein is Membrane-bound lytic murein transglycosylase F.